Here is a 217-residue protein sequence, read N- to C-terminus: Meiotically up-regulated gene 37 protein (217 aa).

Has a role in meiosis. The sequence is that of Meiotically up-regulated gene 37 protein (mug37) from Schizosaccharomyces pombe (strain 972 / ATCC 24843) (Fission yeast).